Reading from the N-terminus, the 365-residue chain is Histidinol-phosphate aminotransferase (365 aa).

Lys220 carries the N6-(pyridoxal phosphate)lysine modification.

This sequence belongs to the class-II pyridoxal-phosphate-dependent aminotransferase family. Histidinol-phosphate aminotransferase subfamily. As to quaternary structure, homodimer. Requires pyridoxal 5'-phosphate as cofactor.

It catalyses the reaction L-histidinol phosphate + 2-oxoglutarate = 3-(imidazol-4-yl)-2-oxopropyl phosphate + L-glutamate. The protein operates within amino-acid biosynthesis; L-histidine biosynthesis; L-histidine from 5-phospho-alpha-D-ribose 1-diphosphate: step 7/9. The polypeptide is Histidinol-phosphate aminotransferase (Xylella fastidiosa (strain 9a5c)).